The sequence spans 941 residues: Protocadherin alpha-12 (941 aa).

A signal peptide spans 1 to 29 (MVIIGPRGPGSQRLLLSLLLLAAWEVGSG). Cadherin domains are found at residues 30–133 (QLHY…PPVF), 134–242 (RERE…GPAF), 243–350 (DKPS…VPEV), 351–455 (MVTS…APAF), 456–565 (AQPE…APAL), and 581–678 (VPRS…APKT). Residues 30–697 (QLHYSVYEEA…DPEAALVDIN (668 aa)) are Extracellular-facing. Asn257 and Asn265 each carry an N-linked (GlcNAc...) asparagine glycan. A glycan (N-linked (GlcNAc...) asparagine) is linked at Asn548. The helical transmembrane segment at 698-718 (VYLIIAICAVSSLLVLTLLLY) threads the bilayer. At 719-941 (TALRCSAPPT…GNSTTDNSDQ (223 aa)) the chain is on the cytoplasmic side. PXXP repeat units follow at residues 734–737 (PGKP), 790–793 (PRQP), 823–826 (PGGP), 863–866 (GPGN), and 882–885 (PGSP). Residues 734-885 (PGKPTLVCSS…PDKFIIPGSP (152 aa)) form a 5 X 4 AA repeats of P-X-X-P region. The segment at 818 to 941 (ILRAGPGGPD…GNSTTDNSDQ (124 aa)) is disordered. The segment covering 900–914 (DKSDFITFGKKEETK) has biased composition (basic and acidic residues).

Its subcellular location is the cell membrane. Potential calcium-dependent cell-adhesion protein. May be involved in the establishment and maintenance of specific neuronal connections in the brain. The sequence is that of Protocadherin alpha-12 (PCDHA12) from Homo sapiens (Human).